Reading from the N-terminus, the 487-residue chain is Chromosomal replication initiator protein DnaA (487 aa).

Residues 1 to 92 (MTIKGGVVSQ…SELWTANDAT (92 aa)) form a domain I, interacts with DnaA modulators region. Positions 92-144 (TGRRLDLKSRLEFESVGGAGYEAKAEPIEIVLPVSSDVPALAPTNGSKPSPVQ) are domain II. A domain III, AAA+ region region spans residues 145 to 367 (GLQERFTFDT…GALNTLSARA (223 aa)). ATP is bound by residues Gly-189, Gly-191, Lys-192, and Thr-193. A domain IV, binds dsDNA region spans residues 368-487 (GEGVSRLTLE…LETITRKLRG (120 aa)).

The protein belongs to the DnaA family. In terms of assembly, oligomerizes as a right-handed, spiral filament on DNA at oriC.

The protein localises to the cytoplasm. Its function is as follows. Plays an essential role in the initiation and regulation of chromosomal replication. ATP-DnaA binds to the origin of replication (oriC) to initiate formation of the DNA replication initiation complex once per cell cycle. Binds the DnaA box (a 9 base pair repeat at the origin) and separates the double-stranded (ds)DNA. Forms a right-handed helical filament on oriC DNA; dsDNA binds to the exterior of the filament while single-stranded (ss)DNA is stabiized in the filament's interior. The ATP-DnaA-oriC complex binds and stabilizes one strand of the AT-rich DNA unwinding element (DUE), permitting loading of DNA polymerase. After initiation quickly degrades to an ADP-DnaA complex that is not apt for DNA replication. Binds acidic phospholipids. The chain is Chromosomal replication initiator protein DnaA from Caulobacter sp. (strain K31).